The following is a 367-amino-acid chain: Pectate lyase 1 (367 aa).

A signal peptide spans 1 to 21 (MASPCLIAFLVFLCAIVSCCS). Intrachain disulfides connect cysteine 28/cysteine 45 and cysteine 128/cysteine 147. Asparagine 148 is a glycosylation site (N-linked (GlcNAc...) asparagine). Position 170 (aspartate 170) interacts with Ca(2+). The N-linked (GlcNAc...) asparagine glycan is linked to asparagine 178. Ca(2+)-binding residues include aspartate 194 and aspartate 198. The active site involves arginine 250. A disulfide bridge connects residues cysteine 306 and cysteine 312.

Belongs to the polysaccharide lyase 1 family. Amb a subfamily. Ca(2+) is required as a cofactor.

It carries out the reaction Eliminative cleavage of (1-&gt;4)-alpha-D-galacturonan to give oligosaccharides with 4-deoxy-alpha-D-galact-4-enuronosyl groups at their non-reducing ends.. Its pathway is glycan metabolism; pectin degradation; 2-dehydro-3-deoxy-D-gluconate from pectin: step 2/5. Has pectate lyase activity. The protein is Pectate lyase 1 of Juniperus virginiana (Eastern redcedar).